We begin with the raw amino-acid sequence, 360 residues long: Histidinol-phosphate aminotransferase (360 aa).

Position 218 is an N6-(pyridoxal phosphate)lysine (K218).

Belongs to the class-II pyridoxal-phosphate-dependent aminotransferase family. Histidinol-phosphate aminotransferase subfamily. Homodimer. The cofactor is pyridoxal 5'-phosphate.

It carries out the reaction L-histidinol phosphate + 2-oxoglutarate = 3-(imidazol-4-yl)-2-oxopropyl phosphate + L-glutamate. It participates in amino-acid biosynthesis; L-histidine biosynthesis; L-histidine from 5-phospho-alpha-D-ribose 1-diphosphate: step 7/9. The sequence is that of Histidinol-phosphate aminotransferase from Chlorobium phaeobacteroides (strain DSM 266 / SMG 266 / 2430).